A 589-amino-acid chain; its full sequence is Aspartate--tRNA ligase (589 aa).

An L-aspartate-binding site is contributed by E172. The aspartate stretch occupies residues 196–199; that stretch reads QLFK. R218 is an L-aspartate binding site. ATP is bound by residues 218–220 and Q227; that span reads RDE. H449 contacts L-aspartate. E483 is an ATP binding site. An L-aspartate-binding site is contributed by R490. Residue 535-538 participates in ATP binding; it reads GLDR.

The protein belongs to the class-II aminoacyl-tRNA synthetase family. Type 1 subfamily. As to quaternary structure, homodimer.

Its subcellular location is the cytoplasm. The catalysed reaction is tRNA(Asp) + L-aspartate + ATP = L-aspartyl-tRNA(Asp) + AMP + diphosphate. In terms of biological role, catalyzes the attachment of L-aspartate to tRNA(Asp) in a two-step reaction: L-aspartate is first activated by ATP to form Asp-AMP and then transferred to the acceptor end of tRNA(Asp). In Actinobacillus succinogenes (strain ATCC 55618 / DSM 22257 / CCUG 43843 / 130Z), this protein is Aspartate--tRNA ligase.